A 151-amino-acid chain; its full sequence is HTH-type transcriptional regulator FL11 (151 aa).

In terms of domain architecture, HTH asnC-type spans 5-66 (LDEIDKKIIK…IIDPEALGYS (62 aa)). The segment at residues 24–43 (LREISKITGLAESTIHERIR) is a DNA-binding region (H-T-H motif). 98 to 104 (ETTGDYD) is an L-arginine binding site. Residues N118, D122, and 133 to 135 (THT) each bind L-lysine. Residues D122 and 133-135 (THT) contribute to the L-arginine site.

Homodimer. Binds DNA as a dimer and an octamer. The octamer formed with lysine is stable in solution, but the octamer formed with arginine is unstable without DNA. When crystallized in the absence of DNA, dimers are assembled into helical cylinders with six dimers per turn. In solution, predominantly behaves as a dimer.

In the famine mode, FL11 forms dimers and acts as a repressor, leading to growth arrest. In the feast mode, in the presence of high concentrations of lysine or arginine, four dimers assemble into an octamer and cover the fl11 and lysine biosynthesis promoters. This leads to the inhibition of fl11 expression and lysine biosynthesis, decrease of the FL11 concentration in the cell, derepression of the target genes and activation of the metabolism. Its function is as follows. DNA-binding protein involved in the repression of transcription of a large number of genes, thereby arresting growth, in response to environmental changes. Binding sites are identified in promoters of approximately 200 transcription units, including genes involved in ATP synthesis, transmembrane transport, translation and DNA synthesis. The chain is HTH-type transcriptional regulator FL11 from Pyrococcus horikoshii (strain ATCC 700860 / DSM 12428 / JCM 9974 / NBRC 100139 / OT-3).